A 122-amino-acid polypeptide reads, in one-letter code: Large ribosomal subunit protein uL14 (122 aa).

This sequence belongs to the universal ribosomal protein uL14 family. Part of the 50S ribosomal subunit. Forms a cluster with proteins L3 and L19. In the 70S ribosome, L14 and L19 interact and together make contacts with the 16S rRNA in bridges B5 and B8.

Functionally, binds to 23S rRNA. Forms part of two intersubunit bridges in the 70S ribosome. In Chelativorans sp. (strain BNC1), this protein is Large ribosomal subunit protein uL14.